The chain runs to 242 residues: Zinc-finger homeodomain protein 13 (242 aa).

A ZF-HD dimerization-type; degenerate zinc finger spans residues 64–111 (YYECRKNHAADIGTTAYDGCGEFVSSTGEEDSLNCAACGCHRNFHREE). A disordered region spans residues 144–166 (GGKSEGKKKKKEKESYGGDPIIK). Basic and acidic residues predominate over residues 155-166 (EKESYGGDPIIK). A DNA-binding region (homeobox) is located at residues 179–238 (VKRLKTKFTAEQTEKMRDYAEKLRWKVRPERQEEVEEFCVEIGVNRKNFRIWMNNHKDKI).

As to quaternary structure, homo- and heterodimer with other ZFHD proteins. Interacts with MIF1, MIF2 and MIF3; these interactions prevent nuclear localization and DNA-binding to inhibit transcription regulation activity. Binds to ZHD11. In terms of tissue distribution, mostly expressed in flowers.

The protein localises to the nucleus. Putative transcription factor. In Arabidopsis thaliana (Mouse-ear cress), this protein is Zinc-finger homeodomain protein 13 (ZHD13).